We begin with the raw amino-acid sequence, 437 residues long: Putative permease IIC component (437 aa).

The PTS EIIC type-2 domain maps to 2–437 (FDYILSLGGT…LFLRKRELSE (436 aa)). Transmembrane regions (helical) follow at residues 5-25 (ILSL…GLIF), 35-55 (AGVT…MAID), 88-108 (ATAI…AMLV), 134-154 (LMTG…ALSL), 173-193 (ISIP…LDAI), 215-235 (GMVG…GLAA), 236-256 (GEGF…MVLF), 302-322 (TIAV…ILPG), 325-345 (VLPL…TVIH), 354-374 (ISGV…APYF), 385-405 (FAGE…GWSI), and 410-430 (SLGI…VLFL).

Its subcellular location is the cell inner membrane. In terms of biological role, the phosphoenolpyruvate-dependent sugar phosphotransferase system (PTS), a major carbohydrate active -transport system, catalyzes the phosphorylation of incoming sugar substrates concomitant with their translocation across the cell membrane. This chain is Putative permease IIC component (sgcC), found in Escherichia coli (strain K12).